The following is a 311-amino-acid chain: p-hydroxybenzoic acid efflux pump subunit AaeA (311 aa).

Residues 11–31 traverse the membrane as a helical segment; it reads IAITLILVLLGIIAIFKAWVF.

Belongs to the membrane fusion protein (MFP) (TC 8.A.1) family.

The protein resides in the cell inner membrane. In terms of biological role, forms an efflux pump with AaeB. This chain is p-hydroxybenzoic acid efflux pump subunit AaeA, found in Serratia proteamaculans (strain 568).